The following is a 536-amino-acid chain: Small conductance calcium-activated potassium channel protein 1 (536 aa).

A disordered region spans residues 1 to 90 (MSSRSHNGSV…KPPTVSHRLG (90 aa)). A compositionally biased stretch (acidic residues) spans 65 to 75 (QEEEEEEEDED). Residues 107 to 127 (LIFGMFGIVVMVTETELSWGV) form a helical membrane-spanning segment. The helical transmembrane segment at 136–156 (FALKCLISLSTVILLGLVILY) threads the bilayer. The chain crosses the membrane as a helical span at residues 224–244 (VLLSIPMFLRLYLLARVMLLH). The chain crosses the membrane as a helical span at residues 273-293 (LMTICPGTVLLVFSISSWIVA). A helical membrane pass occupies residues 313 to 333 (FLGAMWLISITFLSIGYGDMV). An intramembrane region (pore-forming) is located at residues 342–362 (VCLLTGIMGAGCTALVVAVVA). The tract at residues 380–459 (DTQLTKRVKN…LADLAKAQSI (80 aa)) is calmodulin-binding. A helical transmembrane segment spans residues 487–507 (VLGASLQALPSLIAQAICPLP). The interval 514–536 (SHLTTAAQSPQSHWLPTTASDCG) is disordered. A compositionally biased stretch (polar residues) spans 515–536 (HLTTAAQSPQSHWLPTTASDCG).

It belongs to the potassium channel KCNN family. KCa2.1/KCNN1 subfamily. In terms of assembly, homodimer. Heteromultimer with KCNN2 and KCNN3. The complex is composed of 4 channel subunits each of which binds to a calmodulin subunit which regulates the channel activity through calcium-binding. Interacts with calmodulin. As to expression, widely expressed including brain.

It is found in the membrane. The protein localises to the cytoplasm. Its subcellular location is the myofibril. The protein resides in the sarcomere. It localises to the z line. It carries out the reaction K(+)(in) = K(+)(out). Inhibited by bee venom neurotoxin apamin. Inhibited by d-tubocurarine and tetraethylammonium (TEA). Its function is as follows. Small conductance calcium-activated potassium channel that mediates the voltage-independent transmembrane transfer of potassium across the cell membrane through a constitutive interaction with calmodulin which binds the intracellular calcium allowing its opening. The current is characterized by a voltage-independent activation, an intracellular calcium concentration increase-dependent activation and a single-channel conductance of about 3 picosiemens. Also presents an inwardly rectifying current, thus reducing its already small outward conductance of potassium ions, which is particularly the case when the membrane potential displays positive values, above + 20 mV. Activation is followed by membrane hyperpolarization. Thought to regulate neuronal excitability by contributing to the slow component of synaptic afterhyperpolarization. The protein is Small conductance calcium-activated potassium channel protein 1 of Rattus norvegicus (Rat).